The following is a 244-amino-acid chain: Octanoyltransferase (244 aa).

The BPL/LPL catalytic domain occupies 49–237 (VAPGNFLIFC…HLTALFELHI (189 aa)). Residues 94-101 (RGGDITYH), 167-169 (AMG), and 180-182 (GFA) each bind substrate. Residue cysteine 198 is the Acyl-thioester intermediate of the active site.

This sequence belongs to the LipB family.

It localises to the cytoplasm. The catalysed reaction is octanoyl-[ACP] + L-lysyl-[protein] = N(6)-octanoyl-L-lysyl-[protein] + holo-[ACP] + H(+). Its pathway is protein modification; protein lipoylation via endogenous pathway; protein N(6)-(lipoyl)lysine from octanoyl-[acyl-carrier-protein]: step 1/2. Its function is as follows. Catalyzes the transfer of endogenously produced octanoic acid from octanoyl-acyl-carrier-protein onto the lipoyl domains of lipoate-dependent enzymes. Lipoyl-ACP can also act as a substrate although octanoyl-ACP is likely to be the physiological substrate. The sequence is that of Octanoyltransferase from Cytophaga hutchinsonii (strain ATCC 33406 / DSM 1761 / CIP 103989 / NBRC 15051 / NCIMB 9469 / D465).